A 107-amino-acid polypeptide reads, in one-letter code: UPF0102 protein CTN_0433 (107 aa).

The protein belongs to the UPF0102 family.

The polypeptide is UPF0102 protein CTN_0433 (Thermotoga neapolitana (strain ATCC 49049 / DSM 4359 / NBRC 107923 / NS-E)).